The following is a 123-amino-acid chain: Large ribosomal subunit protein uL14 (123 aa).

This sequence belongs to the universal ribosomal protein uL14 family. In terms of assembly, part of the 50S ribosomal subunit. Forms a cluster with proteins L3 and L19. In the 70S ribosome, L14 and L19 interact and together make contacts with the 16S rRNA in bridges B5 and B8.

In terms of biological role, binds to 23S rRNA. Forms part of two intersubunit bridges in the 70S ribosome. This is Large ribosomal subunit protein uL14 from Vibrio vulnificus (strain CMCP6).